Here is a 431-residue protein sequence, read N- to C-terminus: Keratin, type I cytoskeletal 40 (431 aa).

A head region spans residues 1–89 (MASDCSPTGC…CEDGVFNSNE (89 aa)). The 312-residue stretch at 89 to 400 (EKETMQFLND…GLLDSEDSRL (312 aa)) folds into the IF rod domain. A coil 1A region spans residues 90-124 (KETMQFLNDRLASYLEKVRGLEELNAELECRIREQ). The linker 1 stretch occupies residues 125-135 (CEEDVPLVCPD). The interval 136-236 (YQCYFDTIED…HEEEVNVLRG (101 aa)) is coil 1B. Residues 237-252 (QLGDRLSVELDTAPTT) are linker 12. The interval 253 to 396 (DLNRVLDEMR…NTYQGLLDSE (144 aa)) is coil 2. The segment at 397-431 (DSRLPCNPCSATSMSNDTCEPCSAYVICTVENSCP) is tail.

This sequence belongs to the intermediate filament family. As to quaternary structure, heterotetramer of two type I and two type II keratins.

Its function is as follows. May play a role in late hair differentiation. In Bos taurus (Bovine), this protein is Keratin, type I cytoskeletal 40 (KRT40).